The sequence spans 340 residues: Ferrochelatase (340 aa).

Residues His-189 and Glu-292 each coordinate Fe cation.

This sequence belongs to the ferrochelatase family.

It localises to the cytoplasm. It carries out the reaction heme b + 2 H(+) = protoporphyrin IX + Fe(2+). It participates in porphyrin-containing compound metabolism; protoheme biosynthesis; protoheme from protoporphyrin-IX: step 1/1. In terms of biological role, catalyzes the ferrous insertion into protoporphyrin IX. This Pseudomonas fluorescens (strain ATCC BAA-477 / NRRL B-23932 / Pf-5) protein is Ferrochelatase.